A 443-amino-acid polypeptide reads, in one-letter code: Thymidine phosphorylase (443 aa).

It belongs to the thymidine/pyrimidine-nucleoside phosphorylase family. As to quaternary structure, homodimer.

It catalyses the reaction thymidine + phosphate = 2-deoxy-alpha-D-ribose 1-phosphate + thymine. Its pathway is pyrimidine metabolism; dTMP biosynthesis via salvage pathway; dTMP from thymine: step 1/2. Its function is as follows. The enzymes which catalyze the reversible phosphorolysis of pyrimidine nucleosides are involved in the degradation of these compounds and in their utilization as carbon and energy sources, or in the rescue of pyrimidine bases for nucleotide synthesis. In Shewanella oneidensis (strain ATCC 700550 / JCM 31522 / CIP 106686 / LMG 19005 / NCIMB 14063 / MR-1), this protein is Thymidine phosphorylase.